Reading from the N-terminus, the 298-residue chain is Acetylglutamate kinase (298 aa).

Substrate contacts are provided by residues 69 to 70 (GG), R91, and N196.

This sequence belongs to the acetylglutamate kinase family. ArgB subfamily.

Its subcellular location is the cytoplasm. The enzyme catalyses N-acetyl-L-glutamate + ATP = N-acetyl-L-glutamyl 5-phosphate + ADP. It participates in amino-acid biosynthesis; L-arginine biosynthesis; N(2)-acetyl-L-ornithine from L-glutamate: step 2/4. Catalyzes the ATP-dependent phosphorylation of N-acetyl-L-glutamate. This chain is Acetylglutamate kinase, found in Rhodopseudomonas palustris (strain TIE-1).